A 96-amino-acid chain; its full sequence is Keratin-associated protein 12-1 (96 aa).

A run of 14 repeats spans residues Cys10–Cys14, Cys15–Pro19, Cys24–Val28, Cys30–Val34, Cys35–Ser39, Cys45–Arg49, Cys50–Val54, Cys55–Ser59, Cys60–Val64, Cys70–Gly74, Cys75–Ser79, Cys80–Leu84, Cys85–Ser89, and Cys90–Ser94. Residues Cys10–Ser94 form a 14 X 5 AA approximate repeats region.

This sequence belongs to the KRTAP type 12 family. In terms of assembly, interacts with hair keratins. Restricted to a narrow region of the hair fiber cuticle, lying approximately 20 cell layers above the apex of the dermal papilla of the hair root; not detected in any other tissues.

Its function is as follows. In the hair cortex, hair keratin intermediate filaments are embedded in an interfilamentous matrix, consisting of hair keratin-associated proteins (KRTAP), which are essential for the formation of a rigid and resistant hair shaft through their extensive disulfide bond cross-linking with abundant cysteine residues of hair keratins. The matrix proteins include the high-sulfur and high-glycine-tyrosine keratins. This is Keratin-associated protein 12-1 (KRTAP12-1) from Homo sapiens (Human).